A 401-amino-acid chain; its full sequence is Nodal homolog 3-B (401 aa).

A signal peptide spans 1–18 (MALLNLFFCLVFSSPLMA). A propeptide spanning residues 19-274 (MPPVLQGRKS…KVNGFRRLRR (256 aa)) is cleaved from the precursor. 4 N-linked (GlcNAc...) asparagine glycosylation sites follow: Asn168, Asn337, Asn341, and Asn344. 2 disulfides stabilise this stretch: Cys299/Cys365 and Cys328/Cys396.

This sequence belongs to the TGF-beta family. Monomer. The propeptide region interacts with bmp4 in a non-covalent manner. As to expression, expressed in the dorsal marginal region of late blastula, becoming restricted to the dorsal blastopore lip (Spemann organizer) at the early gastrula stage.

It is found in the secreted. Functionally, exhibits mesoderm-dorsalizing activity and neural-inducing activity, but lacks mesoderm-inducing activity. Regulates the expression of specific mesodermal and neural genes. Induces convergent extension movements at the embryonic midline by activating the fgf signaling pathway to induce t/bra expression in the organizer region. Acts with wnt11 to induce Spemann organizer cells and induce axis formation. The unprocessed protein antagonizes bmp-signaling. In Xenopus laevis (African clawed frog), this protein is Nodal homolog 3-B (nodal3-b).